Reading from the N-terminus, the 116-residue chain is Protein Wnt-5b (116 aa).

A lipid anchor (O-palmitoleoyl serine; by PORCN) is attached at S1. N-linked (GlcNAc...) asparagine glycosylation is found at N69 and N83. Cysteines 82 and 97 form a disulfide.

This sequence belongs to the Wnt family. In terms of processing, palmitoleoylation is required for efficient binding to frizzled receptors. Depalmitoleoylation leads to Wnt signaling pathway inhibition.

The protein resides in the secreted. Its subcellular location is the extracellular space. The protein localises to the extracellular matrix. Ligand for members of the frizzled family of seven transmembrane receptors. Probable developmental protein. May be a signaling molecule which affects the development of discrete regions of tissues. Is likely to signal over only few cell diameters. This is Protein Wnt-5b (WNT-5B) from Alopias vulpinus (Common thresher shark).